The chain runs to 106 residues: Large ribosomal subunit protein uL24 (106 aa).

Residues 84-97 (EKIGRELGAKEKAR) show a composition bias toward basic and acidic residues. The tract at residues 84–106 (EKIGRELGAKEKARLQKRKTAAK) is disordered.

The protein belongs to the universal ribosomal protein uL24 family. In terms of assembly, part of the 50S ribosomal subunit.

One of two assembly initiator proteins, it binds directly to the 5'-end of the 23S rRNA, where it nucleates assembly of the 50S subunit. Its function is as follows. One of the proteins that surrounds the polypeptide exit tunnel on the outside of the subunit. The polypeptide is Large ribosomal subunit protein uL24 (Anaeromyxobacter dehalogenans (strain 2CP-1 / ATCC BAA-258)).